The sequence spans 443 residues: Serine/threonine-protein kinase 40 (443 aa).

The span at 1 to 11 (MKRRASERDAG) shows a compositional bias: basic and acidic residues. Residues 1 to 26 (MKRRASERDAGETSARSKALCSSISG) are disordered. Polar residues predominate over residues 14 to 26 (SARSKALCSSISG). The region spanning 35–332 (FILGPRLGNS…EVLESLGAII (298 aa)) is the Protein kinase domain. Residues 41–49 (LGNSPVPSI) and K66 each bind ATP. The active-site Proton acceptor is D197.

It belongs to the protein kinase superfamily. CAMK Ser/Thr protein kinase family.

It is found in the nucleus. The protein resides in the cytoplasm. It carries out the reaction L-seryl-[protein] + ATP = O-phospho-L-seryl-[protein] + ADP + H(+). The catalysed reaction is L-threonyl-[protein] + ATP = O-phospho-L-threonyl-[protein] + ADP + H(+). Functionally, may be a negative regulator of NF-kappa-B and p53-mediated gene transcription. The sequence is that of Serine/threonine-protein kinase 40 (stk40) from Xenopus tropicalis (Western clawed frog).